Reading from the N-terminus, the 264-residue chain is S-adenosylmethionine decarboxylase proenzyme (264 aa).

Ser111 (schiff-base intermediate with substrate; via pyruvic acid) is an active-site residue. Ser111 is modified (pyruvic acid (Ser); by autocatalysis). The active-site Proton acceptor; for processing activity is His116. Cys139 serves as the catalytic Proton donor; for catalytic activity.

This sequence belongs to the prokaryotic AdoMetDC family. Type 2 subfamily. As to quaternary structure, heterooctamer of four alpha and four beta chains arranged as a tetramer of alpha/beta heterodimers. It depends on pyruvate as a cofactor. In terms of processing, is synthesized initially as an inactive proenzyme. Formation of the active enzyme involves a self-maturation process in which the active site pyruvoyl group is generated from an internal serine residue via an autocatalytic post-translational modification. Two non-identical subunits are generated from the proenzyme in this reaction, and the pyruvate is formed at the N-terminus of the alpha chain, which is derived from the carboxyl end of the proenzyme. The post-translation cleavage follows an unusual pathway, termed non-hydrolytic serinolysis, in which the side chain hydroxyl group of the serine supplies its oxygen atom to form the C-terminus of the beta chain, while the remainder of the serine residue undergoes an oxidative deamination to produce ammonia and the pyruvoyl group blocking the N-terminus of the alpha chain.

The catalysed reaction is S-adenosyl-L-methionine + H(+) = S-adenosyl 3-(methylsulfanyl)propylamine + CO2. It participates in amine and polyamine biosynthesis; S-adenosylmethioninamine biosynthesis; S-adenosylmethioninamine from S-adenosyl-L-methionine: step 1/1. Functionally, catalyzes the decarboxylation of S-adenosylmethionine to S-adenosylmethioninamine (dcAdoMet), the propylamine donor required for the synthesis of the polyamines spermine and spermidine from the diamine putrescine. In Geobacillus thermodenitrificans (strain NG80-2), this protein is S-adenosylmethionine decarboxylase proenzyme.